Here is a 92-residue protein sequence, read N- to C-terminus: Small ribosomal subunit protein uS19 (92 aa).

It belongs to the universal ribosomal protein uS19 family.

Protein S19 forms a complex with S13 that binds strongly to the 16S ribosomal RNA. This chain is Small ribosomal subunit protein uS19, found in Borrelia duttonii (strain Ly).